Reading from the N-terminus, the 273-residue chain is MKSFITSWADEVDADYVDGLPPSNEYIKGDYKYVTEYKFNDDGKKVKVVRTFKIEKQIVPKAVARRRNWVKFGDSRSDKPGPNSQTTMASEEILMQFIGSKEFDQTHETQLDPGKNIAKCRICNGEHWSVNCPYKGTSMDSKTMMETKANAAAAAAISDPSKTGKYVPPFMKDGGGISGSKNWGRGRDRDDSSAVRISNLSESMTETDLEELVKKIGPHTKMYLAREKNSGLCKGFAYVHFKFRQDAAAAIEVLNGHGYDHLILCVEWSKPQP.

In terms of domain architecture, RRM spans 193–271 (SAVRISNLSE…LILCVEWSKP (79 aa)).

It belongs to the eIF-3 subunit G family. In terms of assembly, component of the eukaryotic translation initiation factor 3 (eIF-3) complex. The eIF-3 complex interacts with pix.

It localises to the cytoplasm. Functionally, RNA-binding component of the eukaryotic translation initiation factor 3 (eIF-3) complex, which is involved in protein synthesis of a specialized repertoire of mRNAs and, together with other initiation factors, stimulates binding of mRNA and methionyl-tRNAi to the 40S ribosome. The eIF-3 complex specifically targets and initiates translation of a subset of mRNAs involved in cell proliferation. This subunit can bind 18S rRNA. The chain is Eukaryotic translation initiation factor 3 subunit G-2 from Drosophila simulans (Fruit fly).